The sequence spans 126 residues: FCS-Like Zinc finger 7 (126 aa).

An FLZ-type zinc finger spans residues 72 to 116 (SFLVNCGFCKRGLAPGRDIYMYKGDAAFCSIECREQQMEHDEGKT).

The protein belongs to the FLZ family. Interacts with KIN10 and KIN11 via its FLZ-type zinc finger domain. Interacts with KINB3 via its N-terminal part. Forms homodimer and heterodimer with FLZ1, FLZ2 and FLZ15 in vitro.

Its subcellular location is the cytoplasm. It is found in the nucleus. May act as an adapter to facilitate the interaction of SnRK1 complex with effector proteins, conferring tissue- and stimulus-type specific differences in the SnRK1 regulation pathway. The sequence is that of FCS-Like Zinc finger 7 from Arabidopsis thaliana (Mouse-ear cress).